A 307-amino-acid chain; its full sequence is Methionyl-tRNA formyltransferase (307 aa).

Residue 108 to 111 coordinates (6S)-5,6,7,8-tetrahydrofolate; sequence SLLP.

Belongs to the Fmt family.

The catalysed reaction is L-methionyl-tRNA(fMet) + (6R)-10-formyltetrahydrofolate = N-formyl-L-methionyl-tRNA(fMet) + (6S)-5,6,7,8-tetrahydrofolate + H(+). In terms of biological role, attaches a formyl group to the free amino group of methionyl-tRNA(fMet). The formyl group appears to play a dual role in the initiator identity of N-formylmethionyl-tRNA by promoting its recognition by IF2 and preventing the misappropriation of this tRNA by the elongation apparatus. This chain is Methionyl-tRNA formyltransferase, found in Xanthomonas campestris pv. campestris (strain 8004).